A 187-amino-acid chain; its full sequence is UPF0340 protein SPJ_0612 (187 aa).

The protein belongs to the UPF0340 family.

The sequence is that of UPF0340 protein SPJ_0612 from Streptococcus pneumoniae (strain JJA).